Here is a 388-residue protein sequence, read N- to C-terminus: Oxytocin receptor (388 aa).

The Extracellular segment spans residues 1–38 (MEGTPAANWSIELDLGSGVPPGAEGNLTAGPPRRNEAL). N-linked (GlcNAc...) asparagine glycans are attached at residues Asn8 and Asn26. The chain crosses the membrane as a helical span at residues 39-63 (ARVEVAVLCLILFLALSGNACVLLA). Topologically, residues 64–74 (LRTTRHKHSRL) are cytoplasmic. The chain crosses the membrane as a helical span at residues 75–97 (FFFMKHLSIADLVVAVFQVLPQL). Residues 98–113 (LWDITFRFYGPDLLCR) are Extracellular-facing. Cys112 and Cys187 are joined by a disulfide. The chain crosses the membrane as a helical span at residues 114 to 135 (LVKYLQVVGMFASTYLLLLMSL). The Cytoplasmic portion of the chain corresponds to 136 to 154 (DRCLAICQPLRSLRRRTDR). The chain crosses the membrane as a helical span at residues 155–175 (LAVLATWLGCLVASVPQVHIF). Topologically, residues 176–202 (SLREVADGVFDCWAVFIQPWGPKAYVT) are extracellular. A helical transmembrane segment spans residues 203 to 225 (WITLAVYIVPVIVLAACYGLISF). Topologically, residues 226–274 (KIWQNLRLKTAAAAAAAEGSDAAGGAGRAALARVSSVKLISKAKIRTVK) are cytoplasmic. The chain crosses the membrane as a helical span at residues 275–293 (MTFIIVLAFIVCWTPFFFV). At 294–308 (QMWSVWDVNAPKEAS) the chain is on the extracellular side. The chain crosses the membrane as a helical span at residues 309 to 331 (AFIIAMLLASLNSCCNPWIYMLF). Topologically, residues 332-388 (TGHLFHELVQRFLCCSARYLKGSRPGETSISKKSNSSTFVLSRRSSSQRSCSQPSSA) are cytoplasmic. The interval 354-388 (SRPGETSISKKSNSSTFVLSRRSSSQRSCSQPSSA) is disordered. Ser365 and Ser367 each carry phosphoserine. Low complexity predominate over residues 365 to 388 (SNSSTFVLSRRSSSQRSCSQPSSA).

The protein belongs to the G-protein coupled receptor 1 family. Vasopressin/oxytocin receptor subfamily.

It localises to the cell membrane. Its function is as follows. Receptor for oxytocin. The activity of this receptor is mediated by G proteins which activate a phosphatidylinositol-calcium second messenger system. This chain is Oxytocin receptor (Oxtr), found in Mus musculus (Mouse).